The primary structure comprises 76 residues: Putative defensin-like protein 184 (76 aa).

Residues 1 to 21 (MKNSSILFVLIIVVFLISSSG) form the signal peptide. Intrachain disulfides connect C32-C76, C38-C58, C44-C70, and C48-C72.

This sequence belongs to the DEFL family.

The protein localises to the secreted. The protein is Putative defensin-like protein 184 (LCR18) of Arabidopsis thaliana (Mouse-ear cress).